The chain runs to 249 residues: 1-(5-phosphoribosyl)-5-[(5-phosphoribosylamino)methylideneamino] imidazole-4-carboxamide isomerase (249 aa).

The active-site Proton acceptor is the Asp11. Asp133 serves as the catalytic Proton donor.

The protein belongs to the HisA/HisF family.

The protein localises to the cytoplasm. It carries out the reaction 1-(5-phospho-beta-D-ribosyl)-5-[(5-phospho-beta-D-ribosylamino)methylideneamino]imidazole-4-carboxamide = 5-[(5-phospho-1-deoxy-D-ribulos-1-ylimino)methylamino]-1-(5-phospho-beta-D-ribosyl)imidazole-4-carboxamide. It participates in amino-acid biosynthesis; L-histidine biosynthesis; L-histidine from 5-phospho-alpha-D-ribose 1-diphosphate: step 4/9. The chain is 1-(5-phosphoribosyl)-5-[(5-phosphoribosylamino)methylideneamino] imidazole-4-carboxamide isomerase from Haemophilus influenzae (strain 86-028NP).